The following is a 337-amino-acid chain: Inositol 2-dehydrogenase (337 aa).

This sequence belongs to the Gfo/Idh/MocA family. Homotetramer.

The catalysed reaction is myo-inositol + NAD(+) = scyllo-inosose + NADH + H(+). Involved in the oxidation of myo-inositol (MI) to 2-keto-myo-inositol (2KMI or 2-inosose). The protein is Inositol 2-dehydrogenase of Burkholderia ambifaria (strain MC40-6).